The chain runs to 969 residues: RNA polymerase-associated protein RapA (969 aa).

One can recognise a Helicase ATP-binding domain in the interval 164 to 334 (EVGRRHAPRV…FARLRLLDSD (171 aa)). Residue 177–184 (DEVGLGKT) participates in ATP binding. Residues 280–283 (DEAH) carry the DEAH box motif. In terms of domain architecture, Helicase C-terminal spans 492-668 (RVNWLLEKLK…GSNEALDDVI (177 aa)).

This sequence belongs to the SNF2/RAD54 helicase family. RapA subfamily. In terms of assembly, interacts with the RNAP. Has a higher affinity for the core RNAP than for the holoenzyme. Its ATPase activity is stimulated by binding to RNAP.

Functionally, transcription regulator that activates transcription by stimulating RNA polymerase (RNAP) recycling in case of stress conditions such as supercoiled DNA or high salt concentrations. Probably acts by releasing the RNAP, when it is trapped or immobilized on tightly supercoiled DNA. Does not activate transcription on linear DNA. Probably not involved in DNA repair. The chain is RNA polymerase-associated protein RapA from Vibrio vulnificus (strain CMCP6).